The primary structure comprises 408 residues: MKRTIILMLDSLGIGASADAVRFGDEGANTLGHIAQACVTGNADNGRKGPLTLPNLTRLGLAHACAASCGEFPAGLDASVTPIAAYGYARELSSGKDTPSGHWEMAGAPVLFDWGYFTDKQNSFPPELLDALVAQGNLPGYLGNCHASGTEILDRLGEEHMRSGKPIFYTSADSVFQIACHEETYGLDKLYELCKLARQLLEPYNIGRVIARPFVGSKAGEFKRTGNRHDYAVEPPMPTLLDRMKAAGGDVISIGKIADIYACCGITQQHKATGLDELWDMTLAQVKTAADQSIIFTNFVDFDSSYGHRRDVAGYAAALEYFDSRLPELLALLLPGDRVVLTADHGCDPIWTGTDHTREHVPVIFYGDTVQPQDLGMRDTFADIGQTIAAYHGLPVLDYGSNCLPEHH.

Mn(2+)-binding residues include Asp10, Asp303, His308, Asp344, His345, and His356.

This sequence belongs to the phosphopentomutase family. Mn(2+) serves as cofactor.

Its subcellular location is the cytoplasm. The enzyme catalyses 2-deoxy-alpha-D-ribose 1-phosphate = 2-deoxy-D-ribose 5-phosphate. It carries out the reaction alpha-D-ribose 1-phosphate = D-ribose 5-phosphate. The protein operates within carbohydrate degradation; 2-deoxy-D-ribose 1-phosphate degradation; D-glyceraldehyde 3-phosphate and acetaldehyde from 2-deoxy-alpha-D-ribose 1-phosphate: step 1/2. Isomerase that catalyzes the conversion of deoxy-ribose 1-phosphate (dRib-1-P) and ribose 1-phosphate (Rib-1-P) to deoxy-ribose 5-phosphate (dRib-5-P) and ribose 5-phosphate (Rib-5-P), respectively. The sequence is that of Phosphopentomutase from Tolumonas auensis (strain DSM 9187 / NBRC 110442 / TA 4).